A 395-amino-acid polypeptide reads, in one-letter code: GTPase Obg (395 aa).

The Obg domain occupies 1 to 159 (MQFVDEASII…RNLRFEMKVM (159 aa)). A disordered region spans residues 128 to 147 (IHFKSSTNRAPRKTTPGTEG). One can recognise an OBG-type G domain in the interval 160-333 (ADVGLLGVPN…LVQAAHRWLT (174 aa)). GTP-binding positions include 166–173 (GVPNAGKS), 191–195 (FTTLV), 213–216 (DVPG), 283–286 (NKLD), and 314–316 (SAI). Positions 173 and 193 each coordinate Mg(2+). Residues 340–368 (AEDETAFEHEREMRRRMEDEAVARAEARM) show a composition bias toward basic and acidic residues. A disordered region spans residues 340–395 (AEDETAFEHEREMRRRMEDEAVARAEARMSRKRKPAEDDDDDFDEDDYDVEVEYAP). Acidic residues predominate over residues 376–395 (EDDDDDFDEDDYDVEVEYAP).

This sequence belongs to the TRAFAC class OBG-HflX-like GTPase superfamily. OBG GTPase family. Monomer. Requires Mg(2+) as cofactor.

The protein resides in the cytoplasm. In terms of biological role, an essential GTPase which binds GTP, GDP and possibly (p)ppGpp with moderate affinity, with high nucleotide exchange rates and a fairly low GTP hydrolysis rate. Plays a role in control of the cell cycle, stress response, ribosome biogenesis and in those bacteria that undergo differentiation, in morphogenesis control. The chain is GTPase Obg from Chromohalobacter salexigens (strain ATCC BAA-138 / DSM 3043 / CIP 106854 / NCIMB 13768 / 1H11).